The sequence spans 476 residues: UDP-N-acetylmuramate--L-alanine ligase (476 aa).

125–131 contacts ATP; that stretch reads GTHGKTT.

The protein belongs to the MurCDEF family.

It is found in the cytoplasm. The enzyme catalyses UDP-N-acetyl-alpha-D-muramate + L-alanine + ATP = UDP-N-acetyl-alpha-D-muramoyl-L-alanine + ADP + phosphate + H(+). It participates in cell wall biogenesis; peptidoglycan biosynthesis. In terms of biological role, cell wall formation. The polypeptide is UDP-N-acetylmuramate--L-alanine ligase (Histophilus somni (strain 129Pt) (Haemophilus somnus)).